The chain runs to 510 residues: MTSLIAQWLHITQDLNSALTRQARFDTLLTTIRDVLNCDSSALLLFEDQHFKPLAINGLAKEVLGRRFSIEQHPRLEAIARAGDIVRFPSESTLPDPYDGLITNHQGKLHVHSCIGLPLLIDDQLIGAITIDALDPNQFDQLKNQELRFISALAAGGLHTALLLEQLETQASLPRESYAEKRTLSNEIIGNSQGMRTLQDQIDAVANTELSVLVMGETGVGKELVANAIHHRSDRASNNLVYLNCAALPESVAESELFGHIKGAFTGAISHRKGKFEQADGGTLFLDEVGELSLELQAKLLRALQYGDIQRVGDDRHIRVNTRIVAATNRVLHEEVKAGRFRADLYHRLSVFPLHVPPLREREEDVILLAGFFAEQVRGKLGLHSVRLSPSLVAELREYHWPGNVRELEHVIKRAAVLAKARTPQMDIELISQDFDIKTPTSPMMPTVAASQAQHEIHSDIGLKQATDAFQKKLILRALESNQGNWAATARQLELDSGNLHRLAKRLGIK.

One can recognise a Sigma-54 factor interaction domain in the interval 188 to 417 (IIGNSQGMRT…LEHVIKRAAV (230 aa)). Residues 216-223 (GETGVGKE) and 279-288 (ADGGTLFLDE) each bind ATP. The segment at residues 486–505 (WAATARQLELDSGNLHRLAK) is a DNA-binding region (H-T-H motif).

It participates in nitrogen metabolism; nitric oxide reduction. In terms of biological role, required for the expression of anaerobic nitric oxide (NO) reductase, acts as a transcriptional activator for at least the norVW operon. Activation also requires sigma-54. The polypeptide is Anaerobic nitric oxide reductase transcription regulator NorR (Vibrio vulnificus (strain CMCP6)).